A 265-amino-acid chain; its full sequence is Tryptophan synthase alpha chain (265 aa).

Catalysis depends on proton acceptor residues Glu-49 and Asp-60.

It belongs to the TrpA family. Tetramer of two alpha and two beta chains.

The enzyme catalyses (1S,2R)-1-C-(indol-3-yl)glycerol 3-phosphate + L-serine = D-glyceraldehyde 3-phosphate + L-tryptophan + H2O. It functions in the pathway amino-acid biosynthesis; L-tryptophan biosynthesis; L-tryptophan from chorismate: step 5/5. The alpha subunit is responsible for the aldol cleavage of indoleglycerol phosphate to indole and glyceraldehyde 3-phosphate. This is Tryptophan synthase alpha chain from Polynucleobacter asymbioticus (strain DSM 18221 / CIP 109841 / QLW-P1DMWA-1) (Polynucleobacter necessarius subsp. asymbioticus).